The chain runs to 887 residues: 3-hydroxy-3-methylglutaryl-coenzyme A reductase (887 aa).

Residues Met1 to His9 are Cytoplasmic-facing. A helical transmembrane segment spans residues Gly10–Gly39. Topologically, residues Asn40–Asp56 are lumenal. Residues Val57 to Phe78 form a helical membrane-spanning segment. In terms of domain architecture, SSD spans Asp61 to Leu218. The INSIG-binding motif motif lies at Tyr75–Phe78. The Cytoplasmic portion of the chain corresponds to Gln79–Lys89. A Glycyl lysine isopeptide (Lys-Gly) (interchain with G-Cter in ubiquitin) cross-link involves residue Lys89. The helical transmembrane segment at Tyr90 to Leu114 threads the bilayer. The Lumenal portion of the chain corresponds to Asp115 to Glu123. Residues Ala124–Ser149 traverse the membrane as a helical segment. The Cytoplasmic portion of the chain corresponds to Gln150–Arg159. A helical membrane pass occupies residues Gly160–Val187. Over Arg188–Glu191 the chain is Lumenal. A helical membrane pass occupies residues Ile192–Leu220. Topologically, residues Glu221–Lys248 are cytoplasmic. Residue Lys248 forms a Glycyl lysine isopeptide (Lys-Gly) (interchain with G-Cter in ubiquitin) linkage. Residues Pro249–Ala275 traverse the membrane as a helical segment. Over Asp276–Lys314 the chain is Lumenal. An N-linked (GlcNAc...) asparagine glycan is attached at Asn281. Residues Met315–Phe339 traverse the membrane as a helical segment. Residues Glu340 to Ala887 are Cytoplasmic-facing. Catalysis depends on charge relay system residues Glu558, Lys690, and Asp766. His865 functions as the Proton donor in the catalytic mechanism. Residue Ser871 is modified to Phosphoserine; by AMPK.

It belongs to the HMG-CoA reductase family. Homotetramer. Homodimer. Interacts (via its SSD) with INSIG1; the interaction, accelerated by sterols, leads to the recruitment of HMGCR to AMFR/gp78 for its ubiquitination by the sterol-mediated ERAD pathway. Interacts with UBIAD1. In terms of processing, N-glycosylated. Glycosylated with high mannose chains including Man(6)(GlcNAc)(2), Man(7)(GlcNAc)(2) and Man(8)(GlcNAc)(2). Deglycosylated by NGLY1 on release from the endoplasmic reticulum (ER) in a sterol-mediated manner. Undergoes sterol-mediated ubiquitination and ER-associated degradation (ERAD). Accumulation of sterols in the endoplasmic reticulum (ER) membrane, triggers binding of the reductase to the ER membrane protein INSIG1 or INSIG2. The INSIG1 binding leads to the recruitment of the ubiquitin ligase, AMFR/gp78, RNF139 or RNF145, initiating ubiquitination of the reductase. The ubiquitinated reductase is then extracted from the ER membrane and delivered to cytosolic 26S proteosomes by a mechanism probably mediated by the ATPase Valosin-containing protein VCP/p97. The INSIG2-binding leads to the recruitment of the ubiquitin ligase RNF139, initiating ubiquitination of the reductase. Lys-248 is the main site of ubiquitination. Ubiquitination is enhanced by the presence of a geranylgeranylated protein. Post-translationally, phosphorylated. Phosphorylation at Ser-871 reduces the catalytic activity.

The protein localises to the endoplasmic reticulum membrane. The protein resides in the peroxisome membrane. It catalyses the reaction (R)-mevalonate + 2 NADP(+) + CoA = (3S)-3-hydroxy-3-methylglutaryl-CoA + 2 NADPH + 2 H(+). Its pathway is metabolic intermediate biosynthesis; (R)-mevalonate biosynthesis; (R)-mevalonate from acetyl-CoA: step 3/3. Its activity is regulated as follows. Regulated by a negative feedback mechanism through sterols and non-sterol metabolites derived from mevalonate. Phosphorylation at Ser-871 down-regulates the catalytic activity. In terms of biological role, catalyzes the conversion of (3S)-hydroxy-3-methylglutaryl-CoA (HMG-CoA) to mevalonic acid, the rate-limiting step in the synthesis of cholesterol and other isoprenoids, thus plays a critical role in cellular cholesterol homeostasis. This Cricetulus griseus (Chinese hamster) protein is 3-hydroxy-3-methylglutaryl-coenzyme A reductase (HMGCR).